Consider the following 390-residue polypeptide: tRNA(Met) cytidine acetate ligase (390 aa).

ATP-binding positions include 7 to 20 (ITEY…HIYH), glycine 101, asparagine 152, and arginine 177.

It belongs to the TmcAL family.

The protein resides in the cytoplasm. The catalysed reaction is cytidine(34) in elongator tRNA(Met) + acetate + ATP = N(4)-acetylcytidine(34) in elongator tRNA(Met) + AMP + diphosphate. In terms of biological role, catalyzes the formation of N(4)-acetylcytidine (ac(4)C) at the wobble position of elongator tRNA(Met), using acetate and ATP as substrates. First activates an acetate ion to form acetyladenylate (Ac-AMP) and then transfers the acetyl group to tRNA to form ac(4)C34. This is tRNA(Met) cytidine acetate ligase from Leuconostoc mesenteroides subsp. mesenteroides (strain ATCC 8293 / DSM 20343 / BCRC 11652 / CCM 1803 / JCM 6124 / NCDO 523 / NBRC 100496 / NCIMB 8023 / NCTC 12954 / NRRL B-1118 / 37Y).